The sequence spans 736 residues: MCEKAKKLVIGNWKDNETDAEKVQKKPFLKGTKSSIWGSSASDISGQSRSLKSSSSVLSSKFVTKRLFTIQHGIEGQKPNFKIRSESFSGPHSAGGFSKSTRESRSKSRSMGNGKFRGKSHLRSSSESAHSSGSESSSSDSNSGSSSDSDSTTGSSSHGSDTGERPRMRSAVFRIHETWQSPNSFKAVKTSRENKESRSRSSSLPQKRFCPSKTQNDLTYGSPEPKSPSNRGRNSWRVGMRTPWKKSQSRSMSCSSIQKILVSRSFTRSRSPHRNTLCYQDQSKNPSRPSNYNTWKQPMDEVYNNAANYRKRHNITLTSWNMRNLPEPVLSFERSGFNATILQQLEDQGYDGPTPIQAQTWSIAKEGKNIVMISGKGTGKTLGYLLPGIMKMHNQRGLMQHKKGPIVLILVDCREAAVMVQREVLYYTNPLELRTHCLLGNSQWQGHAECDLLVASAGRLLQMIDNKKHVVELERCTYLVLDNIDRMIDVGLEGNICRLLCRLRPHAQLIVSSTSWSSNLKRMANKFLGQYTAIRVGEINNIGVRLQNIRQRVEVVNGLSKVERLMKELTAIYDTSDIPGKVVIYVKRQKVVEELVDLIRNCVPCEGIHGGRTAQENQGIIHDFGTGAYNIIVATQMTSNCLDVPGIRYVINYDFPDNIDKYVQRMSRTGCLSYNRNCEVISFFTMANYKLVTEVVDFLKICKQEIGPHLLQLAEEKMFGPRQRRRHRPQRYNRMH.

Disordered stretches follow at residues 32–58 (TKSS…SSVL), 73–166 (GIEG…GERP), 183–237 (NSFK…NSWR), and 265–296 (SFTR…NTWK). 2 stretches are compositionally biased toward low complexity: residues 34–58 (SSIW…SSVL) and 125–160 (SSES…SHGS). Over residues 190–199 (TSRENKESRS) the composition is skewed to basic and acidic residues. Over residues 277-296 (LCYQDQSKNPSRPSNYNTWK) the composition is skewed to polar residues. A Q motif motif is present at residues 330-358 (LSFERSGFNATILQQLEDQGYDGPTPIQA). The Helicase ATP-binding domain occupies 361–534 (WSIAKEGKNI…NKFLGQYTAI (174 aa)). 374 to 381 (SGKGTGKT) lines the ATP pocket. A DEAD box motif is present at residues 482-485 (DNID). The Helicase C-terminal domain maps to 561 to 719 (KVERLMKELT…LLQLAEEKMF (159 aa)).

It belongs to the DEAD box helicase family.

It carries out the reaction ATP + H2O = ADP + phosphate + H(+). Functionally, probable ATP-binding RNA helicase. This Drosophila melanogaster (Fruit fly) protein is Putative ATP-dependent RNA helicase CG14443.